Reading from the N-terminus, the 144-residue chain is Small ribosomal subunit protein eS19A (144 aa).

The protein belongs to the eukaryotic ribosomal protein eS19 family. In terms of assembly, component of the small ribosomal subunit (SSU). Mature yeast ribosomes consist of a small (40S) and a large (60S) subunit. The 40S small subunit contains 1 molecule of ribosomal RNA (18S rRNA) and 33 different proteins (encoded by 57 genes). The large 60S subunit contains 3 rRNA molecules (25S, 5.8S and 5S rRNA) and 46 different proteins (encoded by 81 genes).

Its subcellular location is the cytoplasm. Functionally, component of the ribosome, a large ribonucleoprotein complex responsible for the synthesis of proteins in the cell. The small ribosomal subunit (SSU) binds messenger RNAs (mRNAs) and translates the encoded message by selecting cognate aminoacyl-transfer RNA (tRNA) molecules. The large subunit (LSU) contains the ribosomal catalytic site termed the peptidyl transferase center (PTC), which catalyzes the formation of peptide bonds, thereby polymerizing the amino acids delivered by tRNAs into a polypeptide chain. The nascent polypeptides leave the ribosome through a tunnel in the LSU and interact with protein factors that function in enzymatic processing, targeting, and the membrane insertion of nascent chains at the exit of the ribosomal tunnel. eS19 is required for proper maturation of the small (40S) ribosomal subunit. Binds to 40S pre-ribosomal particles, probably required after association of NOC4 but before association of ENP1, TSR1 and RIO2 with 20/21S pre-rRNA. This is Small ribosomal subunit protein eS19A from Saccharomyces cerevisiae (strain ATCC 204508 / S288c) (Baker's yeast).